The chain runs to 403 residues: Phosphopentomutase (403 aa).

The Mn(2+) site is built by Asp13, Asp298, His303, Asp339, His340, and His351.

This sequence belongs to the phosphopentomutase family. Requires Mn(2+) as cofactor.

The protein localises to the cytoplasm. It carries out the reaction 2-deoxy-alpha-D-ribose 1-phosphate = 2-deoxy-D-ribose 5-phosphate. The enzyme catalyses alpha-D-ribose 1-phosphate = D-ribose 5-phosphate. The protein operates within carbohydrate degradation; 2-deoxy-D-ribose 1-phosphate degradation; D-glyceraldehyde 3-phosphate and acetaldehyde from 2-deoxy-alpha-D-ribose 1-phosphate: step 1/2. In terms of biological role, isomerase that catalyzes the conversion of deoxy-ribose 1-phosphate (dRib-1-P) and ribose 1-phosphate (Rib-1-P) to deoxy-ribose 5-phosphate (dRib-5-P) and ribose 5-phosphate (Rib-5-P), respectively. In Streptococcus pyogenes serotype M3 (strain ATCC BAA-595 / MGAS315), this protein is Phosphopentomutase.